The following is a 451-amino-acid chain: Bifunctional protein GlmU (451 aa).

Residues 1-229 form a pyrophosphorylase region; it reads MQRHAIVLAA…FEEIMGVNDR (229 aa). UDP-N-acetyl-alpha-D-glucosamine-binding positions include 8–11, Lys-22, Gln-72, and 77–78; these read LAAG and GT. Position 102 (Asp-102) interacts with Mg(2+). Positions 139, 154, and 227 each coordinate UDP-N-acetyl-alpha-D-glucosamine. Asn-227 contacts Mg(2+). The segment at 230-250 is linker; the sequence is VMLSEAEKAFRKRINEQHMKN. The segment at 251–451 is N-acetyltransferase; it reads GVTIIDPVTT…QTTKEGYLKK (201 aa). UDP-N-acetyl-alpha-D-glucosamine is bound by residues Arg-332 and Lys-350. The Proton acceptor role is filled by His-362. UDP-N-acetyl-alpha-D-glucosamine is bound by residues Tyr-365 and Asn-376. Residues 385 to 386, Ala-422, and Arg-439 each bind acetyl-CoA; that span reads NY.

It in the N-terminal section; belongs to the N-acetylglucosamine-1-phosphate uridyltransferase family. The protein in the C-terminal section; belongs to the transferase hexapeptide repeat family. In terms of assembly, homotrimer. The cofactor is Mg(2+).

The protein resides in the cytoplasm. It catalyses the reaction alpha-D-glucosamine 1-phosphate + acetyl-CoA = N-acetyl-alpha-D-glucosamine 1-phosphate + CoA + H(+). The catalysed reaction is N-acetyl-alpha-D-glucosamine 1-phosphate + UTP + H(+) = UDP-N-acetyl-alpha-D-glucosamine + diphosphate. The protein operates within nucleotide-sugar biosynthesis; UDP-N-acetyl-alpha-D-glucosamine biosynthesis; N-acetyl-alpha-D-glucosamine 1-phosphate from alpha-D-glucosamine 6-phosphate (route II): step 2/2. It functions in the pathway nucleotide-sugar biosynthesis; UDP-N-acetyl-alpha-D-glucosamine biosynthesis; UDP-N-acetyl-alpha-D-glucosamine from N-acetyl-alpha-D-glucosamine 1-phosphate: step 1/1. Its pathway is bacterial outer membrane biogenesis; LPS lipid A biosynthesis. Its function is as follows. Catalyzes the last two sequential reactions in the de novo biosynthetic pathway for UDP-N-acetylglucosamine (UDP-GlcNAc). The C-terminal domain catalyzes the transfer of acetyl group from acetyl coenzyme A to glucosamine-1-phosphate (GlcN-1-P) to produce N-acetylglucosamine-1-phosphate (GlcNAc-1-P), which is converted into UDP-GlcNAc by the transfer of uridine 5-monophosphate (from uridine 5-triphosphate), a reaction catalyzed by the N-terminal domain. This Staphylococcus saprophyticus subsp. saprophyticus (strain ATCC 15305 / DSM 20229 / NCIMB 8711 / NCTC 7292 / S-41) protein is Bifunctional protein GlmU.